A 209-amino-acid polypeptide reads, in one-letter code: uncharacterized protein (209 aa).

4Fe-4S ferredoxin-type domains lie at 38 to 67, 63 to 92, 90 to 119, 122 to 151, 145 to 174, and 179 to 209; these read KTKP…IFSF, KIFS…KDRF, DRFT…KEIP, KTPV…EINP, INKE…TPDE, and LIVK…HRES. Residues Cys-47, Cys-50, Cys-53, Cys-57, Cys-72, Cys-75, Cys-78, Cys-82, Cys-99, Cys-102, Cys-105, and Cys-109 each coordinate [4Fe-4S] cluster. [4Fe-4S] cluster is bound by residues Cys-154, Cys-157, Cys-160, Cys-164, Cys-188, Cys-191, Cys-194, and Cys-198.

This is an uncharacterized protein from Methanocaldococcus jannaschii (strain ATCC 43067 / DSM 2661 / JAL-1 / JCM 10045 / NBRC 100440) (Methanococcus jannaschii).